The chain runs to 659 residues: MSEQKKSSKIIGIDLGTTNSCVSVMEGGQAKVIVSSEGTRTTPSIVAFKGNETLVGIPAKRQAVTNPAKTLASTKRFIGRKYSEVESEIKTVPYQVASGSNGDVVFPIDGKQFTPEEIGAQVLIKMKETAEAYLGEPVTEAVITVPAYFNDSQRASTKDAGRIAGLDVKRIIPEPTAAALAYGIDKAGDKKIAVFDLGGGTFDISILEIGDGVFEVLSTNGDTHLGGDDFDEVIIKWMIEEFQKQEGIDLSKDNMALQRLKDAAEKAKIELSGMSSTEINQPFITMDANGPKHLTLTLTRAHFEKLASNLIERTKAPCQKALADAKLAASDIDDVLLVGGMSRMPAVQEVVKSIFGKEPNKGVNPDEVVAIGAAIQGGVLGGEVKDVLLLDVIPLSLGIETLGGVMTPLVERNTTIPTQKKQIFSTAADNQPAVTIVVLQGERPMAKDNKEIGRFDLTDIPPAPRGHPQIEVTFDIDANGILHVSAKDAASGREQKIRIEASSGLKEDEIQRMINDAEKNKEEDKKRREASDVRNEADSMIFRAEKAISDYKENIPESLTKEIEERIEKVRSALKEDAPTEKIKEASDELSRHMQKIGEAMQSQSASAAANAQDGPNINTEDLKKHSFSTKPPTGNSSSSANNENIEEADVEIVDKPND.

The residue at position 201 (threonine 201) is a Phosphothreonine; by autocatalysis. The span at 571 to 592 shows a compositional bias: basic and acidic residues; it reads RSALKEDAPTEKIKEASDELSR. Positions 571-659 are disordered; the sequence is RSALKEDAPT…DVEIVDKPND (89 aa). A compositionally biased stretch (low complexity) spans 600–613; sequence AMQSQSASAAANAQ.

It belongs to the heat shock protein 70 family.

In terms of biological role, acts as a chaperone. The protein is Chaperone protein DnaK of Chlamydia abortus (strain DSM 27085 / S26/3) (Chlamydophila abortus).